We begin with the raw amino-acid sequence, 191 residues long: Probable chemoreceptor glutamine deamidase CheD (191 aa).

Belongs to the CheD family.

It catalyses the reaction L-glutaminyl-[protein] + H2O = L-glutamyl-[protein] + NH4(+). Probably deamidates glutamine residues to glutamate on methyl-accepting chemotaxis receptors (MCPs), playing an important role in chemotaxis. The sequence is that of Probable chemoreceptor glutamine deamidase CheD from Hydrogenovibrio crunogenus (strain DSM 25203 / XCL-2) (Thiomicrospira crunogena).